The following is a 421-amino-acid chain: MQALRHVVCALSGGVDSAVAALLLRRRGYQVTGVFMKNWDSLDEHGVCTADKDCEDAYRVCQILDIPFHQVSYVKEYWNDVFSDFLNEYEKGRTPNPDIVCNKHIKFSCFFHYAVDNLGADAIATGHYARTSLEDEEVFEQKHVKKPEGLFRNRFEVRNAVKLLQAADSFKDQTFFLSQVSQDALRRTIFPLGGLTKEFVKKIAAENRLHHVLQKKESMGMCFIGKRNFEHFLLQYLQPRPGHFISIEDNKVLGTHKGWFLYTLGQRANIGGLREPWYVVEKDSVKGDVFVAPRTDHPALYRDLLRTSRVHWIAEEPPAALVRDKMMECHFRFRHQMALVPCVLTLNQDGTVWVTAVQAVRALATGQFAVFYKGDECLGSGKILRLGPSAYTLQKGQRRAGMATESPSDSPEDGPGLSPLL.

ATP-binding positions include 10 to 17 and Met36; that span reads ALSGGVDS. An interaction with target base in tRNA region spans residues 96-98; the sequence is NPD. The Nucleophile role is filled by Cys101. Cys101 and Cys222 are oxidised to a cystine. Gly126 contacts ATP. Residues 171-173 form an interaction with tRNA region; it reads KDQ. Cys222 functions as the Cysteine persulfide intermediate in the catalytic mechanism. An interaction with tRNA region spans residues 334–335; the sequence is RH. Positions 395 to 421 are disordered; that stretch reads KGQRRAGMATESPSDSPEDGPGLSPLL.

Belongs to the MnmA/TRMU family. As to expression, ubiquitous. Abundantly expressed in tissues with high metabolic rates including heart, liver, kidney, and brain.

The protein resides in the mitochondrion. It catalyses the reaction 5-taurinomethyluridine(34) in tRNA + S-sulfanyl-L-cysteinyl-[protein] + AH2 + ATP = 5-taurinomethyl-2-thiouridine(34) in tRNA + L-cysteinyl-[protein] + A + AMP + diphosphate + H(+). Its function is as follows. Catalyzes the 2-thiolation of uridine at the wobble position (U34) of mitochondrial tRNA(Lys), tRNA(Glu) and tRNA(Gln). Required for the formation of 5-taurinomethyl-2-thiouridine (tm5s2U) of mitochondrial tRNA(Lys), tRNA(Glu), and tRNA(Gln) at the wobble position. ATP is required to activate the C2 atom of the wobble base. This is Mitochondrial tRNA-specific 2-thiouridylase 1 (TRMU) from Homo sapiens (Human).